The primary structure comprises 357 residues: MQNFEIDYVEMYVENLEVAAFSWVDKYAFAVAGTSRSADHRSIALRQGQVTLVLTEPTSDRHPAAAYLQTHGDGVADIAMATSDVAAAYEAAVRAGAEAVRAPGQHSEAAVTTATIGGFGDVVHTLIQRDGTSAELPPGFTGSMDVTNHGKGDVDLLGIDHFAICLNAGDLGPTVEYYERALGFRQIFDEHIVVGAQAMNSTVVQSASGAVTLTLIEPDRNADPGQIDEFLKDHQGAGVQHIAFNSNDAVRAVKALSERGVEFLKTPGAYYDLLGERITLQTHSLDDLRATNVLADEDHGGQLFQIFTASTHPRHTIFFEVIERQGAGTFGSSNIKALYEAVELERTGQSEFGAARR.

VOC domains follow at residues 5–129 (EIDY…LIQR) and 158–309 (GIDH…IFTA). Residue histidine 161 participates in Fe cation binding. Histidine 161, serine 201, threonine 214, histidine 241, and glutamine 305 together coordinate substrate. Histidine 241 lines the Fe cation pocket. Position 320 (glutamate 320) interacts with Fe cation.

The protein belongs to the 4HPPD family. In terms of assembly, monomer. Fe cation is required as a cofactor.

The catalysed reaction is 3-(4-hydroxyphenyl)pyruvate + O2 = (S)-4-hydroxymandelate + CO2. It participates in antibiotic biosynthesis; vancomycin biosynthesis. Its function is as follows. Required to synthesize hydroxyphenylglycine, a recurring skeletal component of nonproteinogenic macrocyclic peptide antibiotics such as vancomycin. Catalyzes the conversion of p-hydroxyphenylpyruvate to p-hydroxymandelate. The decarboxylation and hydroxylation activities of HmaS show novel and distinct regioselectivity, compared to all other known p-hydroxyphenylpyruvate dioxygenases, by hydroxylating the benzylic position of the substrate instead of the phenyl ring. The protein is 4-hydroxymandelate synthase of Amycolatopsis orientalis (Nocardia orientalis).